The primary structure comprises 320 residues: o-succinylbenzoate synthase (320 aa).

Lys133 (proton donor) is an active-site residue. Mg(2+)-binding residues include Asp161, Glu190, and Asp213. The Proton acceptor role is filled by Lys235.

The protein belongs to the mandelate racemase/muconate lactonizing enzyme family. MenC type 1 subfamily. It depends on a divalent metal cation as a cofactor.

It catalyses the reaction (1R,6R)-6-hydroxy-2-succinyl-cyclohexa-2,4-diene-1-carboxylate = 2-succinylbenzoate + H2O. The protein operates within quinol/quinone metabolism; 1,4-dihydroxy-2-naphthoate biosynthesis; 1,4-dihydroxy-2-naphthoate from chorismate: step 4/7. Its pathway is quinol/quinone metabolism; menaquinone biosynthesis. Converts 2-succinyl-6-hydroxy-2,4-cyclohexadiene-1-carboxylate (SHCHC) to 2-succinylbenzoate (OSB). The chain is o-succinylbenzoate synthase from Escherichia coli O139:H28 (strain E24377A / ETEC).